A 121-amino-acid chain; its full sequence is Large ribosomal subunit protein uL22 (121 aa).

It belongs to the universal ribosomal protein uL22 family. As to quaternary structure, part of the 50S ribosomal subunit.

This protein binds specifically to 23S rRNA; its binding is stimulated by other ribosomal proteins, e.g. L4, L17, and L20. It is important during the early stages of 50S assembly. It makes multiple contacts with different domains of the 23S rRNA in the assembled 50S subunit and ribosome. In terms of biological role, the globular domain of the protein is located near the polypeptide exit tunnel on the outside of the subunit, while an extended beta-hairpin is found that lines the wall of the exit tunnel in the center of the 70S ribosome. The polypeptide is Large ribosomal subunit protein uL22 (Beutenbergia cavernae (strain ATCC BAA-8 / DSM 12333 / CCUG 43141 / JCM 11478 / NBRC 16432 / NCIMB 13614 / HKI 0122)).